The following is an 80-amino-acid chain: Small pacifastin protease inhibitor (80 aa).

Residues 1–24 (MSKVLKVGLLLLLVAVAASAYAVA) form the signal peptide. The propeptide occupies 25–47 (EENGAPKENKQLPQIDDYGVTNK). The Pacifastin domain occupies 45 to 80 (TNKCPANQPFKWNCNYCTCGPEGKDASCTRMACPQH). 3 disulfides stabilise this stretch: Cys-48–Cys-63, Cys-58–Cys-77, and Cys-61–Cys-72.

It belongs to the protease inhibitor I19 family. In terms of tissue distribution, expressed in the venom apparatus. Low transcript levels are also detected in other tissues.

Its subcellular location is the secreted. In terms of biological role, parasitic wasp protein that may interfere with the host immune response. The recombinant protein inhibits trypsin activity and prophenoloxidase (PPO) activation, an enzyme essential for both clotting and insect innate immune responses. It does not inhibit activity of chymotrypsin and protease K, and has no effect on phenoloxidase (PO) activity. The polypeptide is Small pacifastin protease inhibitor (Nasonia vitripennis (Parasitic wasp)).